A 138-amino-acid polypeptide reads, in one-letter code: Putative acyl-CoA thioesterase YneP (138 aa).

Aspartate 16 is a catalytic residue.

Belongs to the 4-hydroxybenzoyl-CoA thioesterase family.

Its function is as follows. Has acyl-CoA thioesterase activity. In Bacillus subtilis (strain 168), this protein is Putative acyl-CoA thioesterase YneP (yneP).